A 446-amino-acid polypeptide reads, in one-letter code: ATP-dependent protease ATPase subunit HslU (446 aa).

ATP-binding positions include Val-18, 60-65 (GVGKTE), Asp-259, Glu-324, and Arg-396.

The protein belongs to the ClpX chaperone family. HslU subfamily. In terms of assembly, a double ring-shaped homohexamer of HslV is capped on each side by a ring-shaped HslU homohexamer. The assembly of the HslU/HslV complex is dependent on binding of ATP.

The protein resides in the cytoplasm. Functionally, ATPase subunit of a proteasome-like degradation complex; this subunit has chaperone activity. The binding of ATP and its subsequent hydrolysis by HslU are essential for unfolding of protein substrates subsequently hydrolyzed by HslV. HslU recognizes the N-terminal part of its protein substrates and unfolds these before they are guided to HslV for hydrolysis. This Acidovorax ebreus (strain TPSY) (Diaphorobacter sp. (strain TPSY)) protein is ATP-dependent protease ATPase subunit HslU.